Here is a 283-residue protein sequence, read N- to C-terminus: Thymidylate synthase (283 aa).

A dUMP-binding site is contributed by arginine 22. The active-site Nucleophile is the cysteine 160. DUMP is bound by residues 180–183 (RSCD), asparagine 191, and 221–223 (HIY). A (6R)-5,10-methylene-5,6,7,8-tetrahydrofolate-binding site is contributed by aspartate 183. Residue serine 282 coordinates (6R)-5,10-methylene-5,6,7,8-tetrahydrofolate.

Belongs to the thymidylate synthase family. Bacterial-type ThyA subfamily. As to quaternary structure, homodimer.

Its subcellular location is the cytoplasm. It carries out the reaction dUMP + (6R)-5,10-methylene-5,6,7,8-tetrahydrofolate = 7,8-dihydrofolate + dTMP. The protein operates within pyrimidine metabolism; dTTP biosynthesis. Its function is as follows. Catalyzes the reductive methylation of 2'-deoxyuridine-5'-monophosphate (dUMP) to 2'-deoxythymidine-5'-monophosphate (dTMP) while utilizing 5,10-methylenetetrahydrofolate (mTHF) as the methyl donor and reductant in the reaction, yielding dihydrofolate (DHF) as a by-product. This enzymatic reaction provides an intracellular de novo source of dTMP, an essential precursor for DNA biosynthesis. The polypeptide is Thymidylate synthase (Tolumonas auensis (strain DSM 9187 / NBRC 110442 / TA 4)).